The chain runs to 38 residues: Large ribosomal subunit protein bL36A (38 aa).

This sequence belongs to the bacterial ribosomal protein bL36 family.

The chain is Large ribosomal subunit protein bL36A from Enterobacter sp. (strain 638).